We begin with the raw amino-acid sequence, 336 residues long: Di/tripeptide transport system permease protein DppB (336 aa).

The next 6 membrane-spanning stretches (helical) occupy residues 10 to 30 (GLLI…IRLI), 102 to 122 (LSLA…VIAA), 145 to 165 (IFWW…WTPV), 198 to 218 (AVRH…AVIA), 257 to 277 (LIPV…GAVL), and 307 to 327 (ILLV…LYGL). An ABC transmembrane type-1 domain is found at 96-325 (FPATLELSLA…LVNFVVDILY (230 aa)).

Belongs to the binding-protein-dependent transport system permease family. OppBC subfamily. As to quaternary structure, the complex is composed of two ATP-binding proteins (DppD and DppF), two transmembrane proteins (DppB and DppC) and a solute-binding protein (DppA1-A5). Five orthologous SBPs (DppA1-A5) are present in P.aeruginosa, which increases the substrate specificity of the DppBCDF transporter.

It is found in the cell inner membrane. Its function is as follows. Part of the ABC transporter DppABCDF involved in the uptake of various di/tripeptides. Is also involved in the uptake of phaseolotoxin, a toxic tripeptide inhibiting the enzyme ornithine carbamoyltransferase. Responsible for the translocation of the substrate across the membrane. This chain is Di/tripeptide transport system permease protein DppB, found in Pseudomonas aeruginosa (strain UCBPP-PA14).